A 1372-amino-acid polypeptide reads, in one-letter code: Disease resistance protein RRS1B (1372 aa).

A TIR domain is found at 2 to 137; that stretch reads TESEQIVYIS…ETVRDVYEKL (136 aa). One can recognise an NB-ARC domain in the interval 166–417; that stretch reads VGIWGMPGIG…GCGFFPHVGI (252 aa). An ATP-binding site is contributed by 170 to 177; it reads GMPGIGKT. Residues 491–515 form an LRR 1 repeat; the sequence is PEEIEGMFLDTSNLSFDIKHVAFDN. The stretch at 528-544 is one LRR 2; degenerate repeat; that stretch reads NPEVHHVNNFLKGSLSS. LRR repeat units lie at residues 545–568, 570–591, 614–637, 638–658, 659–681, 693–718, 723–747, 749–767, 768–792, and 798–823; these read LPNV…NFDP, HLVE…TKDL, AQNL…TGQL, LHLR…PEIP, PNIE…IVKP, IPGL…KIST, PGKL…VNLE, LKAL…QGFP, RNLK…SLEF, and CVSL…CFDL. Positions 950–964 match the Nuclear localization signal motif; the sequence is INLHCWALGKAVERD. A DNA-binding region (WRKY) is located at residues 1174–1240; that stretch reads DRGSRSSDLW…YISEHNHPFP (67 aa). Disordered stretches follow at residues 1246 to 1288 and 1337 to 1372; these read LAGS…ASPP and QTMF…ILNR. Low complexity predominate over residues 1249–1269; it reads STRSSSSKCSDVTTSASSTVS. Over residues 1270–1279 the composition is skewed to basic and acidic residues; it reads QDKEGPDKSH. The segment covering 1337–1348 has biased composition (polar residues); sequence QTMFLSRRSSGG.

It belongs to the disease resistance TIR-NB-LRR family. Interacts with RPS4B. RPS4B-RRS1B heterodimer interacts with the bacterial effectors AvrRps4 and PopP2.

The protein localises to the nucleus. Transcription factor. Interacts specifically with the W box (5'-(T)TGAC[CT]-3'), a frequently occurring elicitor-responsive cis-acting element. Also acts as a disease resistance protein that specifically recognizes the AvrRps4 type III effector avirulence protein from P.syringae. Heterodimerization with RPS4B is required to form a functional complex to recognize AvrRps4 and to mediate the hypersensitive response. This is Disease resistance protein RRS1B from Arabidopsis thaliana (Mouse-ear cress).